Reading from the N-terminus, the 484-residue chain is Glutamate--tRNA ligase (484 aa).

Residues 11–21 (PSPTGYPHLGN) carry the 'HIGH' region motif. Cys108, Cys110, Cys135, and Asp137 together coordinate Zn(2+). The 'KMSKS' region motif lies at 245-249 (KLSKR). Lys248 is an ATP binding site.

This sequence belongs to the class-I aminoacyl-tRNA synthetase family. Glutamate--tRNA ligase type 1 subfamily. In terms of assembly, monomer. Zn(2+) serves as cofactor.

It is found in the cytoplasm. The catalysed reaction is tRNA(Glu) + L-glutamate + ATP = L-glutamyl-tRNA(Glu) + AMP + diphosphate. In terms of biological role, catalyzes the attachment of glutamate to tRNA(Glu) in a two-step reaction: glutamate is first activated by ATP to form Glu-AMP and then transferred to the acceptor end of tRNA(Glu). The polypeptide is Glutamate--tRNA ligase (Dehalococcoides mccartyi (strain ATCC BAA-2266 / KCTC 15142 / 195) (Dehalococcoides ethenogenes (strain 195))).